The sequence spans 245 residues: Probable phosphatase YcdX (245 aa).

The Zn(2+) site is built by H7, H9, H15, H40, E73, H101, H131, D192, and H194.

Belongs to the PHP family. Homotrimer. It depends on Zn(2+) as a cofactor.

This chain is Probable phosphatase YcdX, found in Escherichia coli O127:H6 (strain E2348/69 / EPEC).